The primary structure comprises 296 residues: uncharacterized protein (296 aa).

An N-terminal signal peptide occupies residues 1–20; it reads MKKLLLIIITVFFAFNVAQA.

This is an uncharacterized protein from Rickettsia felis (strain ATCC VR-1525 / URRWXCal2) (Rickettsia azadi).